Reading from the N-terminus, the 108-residue chain is Peptidyl-prolyl cis-trans isomerase FKBP1A (108 aa).

Residues 20–108 enclose the PPIase FKBP-type domain; the sequence is GQTCVVHYTG…VFDVELLKLE (89 aa). K53 is modified (N6-acetyllysine; alternate). K53 is modified (N6-succinyllysine; alternate).

It belongs to the FKBP-type PPIase family. FKBP1 subfamily. As to quaternary structure, interacts with TGFBR1; prevents TGFBR1 phosphorylation by TGFBR2 and stabilizes it in the inactive conformation. Interacts with ACVR1B and SMAD7. Identified in a complex composed of RYR1, PDE4D, PKA, FKBP1A and protein phosphatase 1 (PP1). Interacts directly with RYR2 and RYR3. Interacts directly with RYR1. Interacts with GLMN; rapamycin and FK506 abolish the interaction with GLMN in a dose dependent manner.

It is found in the cytoplasm. The protein resides in the cytosol. Its subcellular location is the sarcoplasmic reticulum membrane. It carries out the reaction [protein]-peptidylproline (omega=180) = [protein]-peptidylproline (omega=0). With respect to regulation, inhibited by both FK506 and rapamycin. Keeps in an inactive conformation TGFBR1, the TGF-beta type I serine/threonine kinase receptor, preventing TGF-beta receptor activation in absence of ligand. Recruits SMAD7 to ACVR1B which prevents the association of SMAD2 and SMAD3 with the activin receptor complex, thereby blocking the activin signal. May modulate the RYR1 calcium channel activity. PPIases accelerate the folding of proteins. It catalyzes the cis-trans isomerization of proline imidic peptide bonds in oligopeptides. This is Peptidyl-prolyl cis-trans isomerase FKBP1A (Fkbp1a) from Mus musculus (Mouse).